The sequence spans 813 residues: Disintegrin and metalloproteinase domain-containing protein 33 (813 aa).

Residues 1-29 form the signal peptide; sequence MGWRPRRARGTPLLLLLLLLLLWPVPGAG. Positions 30-203 are excised as a propeptide; sequence VLQGHIPGQP…PGGPQSRGRR (174 aa). Residues 30–701 are Extracellular-facing; the sequence is VLQGHIPGQP…GPVQAENHDT (672 aa). Asparagine 109 carries N-linked (GlcNAc...) asparagine glycosylation. The Cysteine switch motif lies at 131-138; it reads CTCSGMSG. Zn(2+) is bound at residue cysteine 133. The N-linked (GlcNAc...) asparagine glycan is linked to asparagine 145. The disordered stretch occupies residues 184-205; sequence PGNKAGMTSLPGGPQSRGRREA. Positions 210-409 constitute a Peptidase M12B domain; sequence KYLELYIVAD…GGGACLSNAP (200 aa). Residues asparagine 231 and asparagine 276 are each glycosylated (N-linked (GlcNAc...) asparagine). Cystine bridges form between cysteine 320–cysteine 404, cysteine 360–cysteine 388, and cysteine 361–cysteine 371. Histidine 345 is a Zn(2+) binding site. Residue glutamate 346 is part of the active site. 2 residues coordinate Zn(2+): histidine 349 and histidine 355. In terms of domain architecture, Disintegrin spans 417-503; the sequence is PALCGNGFVE…HCPPDVYLLD (87 aa). N-linked (GlcNAc...) asparagine glycosylation occurs at asparagine 448. 4 cysteine pairs are disulfide-bonded: cysteine 475-cysteine 495, cysteine 653-cysteine 663, cysteine 657-cysteine 669, and cysteine 671-cysteine 680. Residues 649–681 enclose the EGF-like domain; it reads ELQRCLTACHSHGVCNSNHNCHCAPGWAPPFCD. A helical membrane pass occupies residues 702 to 722; sequence FLLAMLLSVLLPLLPGAGLAW. Over 723-813 the chain is Cytoplasmic; it reads CCYRLPGAHL…QVQMPRSCLW (91 aa). The segment at 746-813 is disordered; it reads SGPKDGPHRD…QVQMPRSCLW (68 aa). Over residues 780–791 the composition is skewed to basic and acidic residues; it reads ENSHEPSSHPEK.

Requires Zn(2+) as cofactor. The precursor is cleaved by a furin endopeptidase. In terms of tissue distribution, expressed in all tissues, except liver, with high expression in placenta, lung, spleen and veins.

The protein localises to the membrane. The protein is Disintegrin and metalloproteinase domain-containing protein 33 (ADAM33) of Homo sapiens (Human).